Here is a 511-residue protein sequence, read N- to C-terminus: Cobyric acid synthase (511 aa).

Residues 251 to 443 (LLDIAIICLP…IHGIFDNDVF (193 aa)) form the GATase cobBQ-type domain. The active-site Nucleophile is C332. The active site involves H435.

It belongs to the CobB/CobQ family. CobQ subfamily.

The protein operates within cofactor biosynthesis; adenosylcobalamin biosynthesis. Catalyzes amidations at positions B, D, E, and G on adenosylcobyrinic A,C-diamide. NH(2) groups are provided by glutamine, and one molecule of ATP is hydrogenolyzed for each amidation. The protein is Cobyric acid synthase of Listeria monocytogenes serotype 4b (strain F2365).